A 262-amino-acid chain; its full sequence is Pyridoxine 5'-phosphate synthase (262 aa).

Residue Asn-6 participates in 3-amino-2-oxopropyl phosphate binding. 8–9 is a 1-deoxy-D-xylulose 5-phosphate binding site; it reads DH. A 3-amino-2-oxopropyl phosphate-binding site is contributed by Arg-17. The Proton acceptor role is filled by His-43. 1-deoxy-D-xylulose 5-phosphate-binding residues include Arg-45 and His-50. Glu-70 acts as the Proton acceptor in catalysis. Thr-102 is a binding site for 1-deoxy-D-xylulose 5-phosphate. His-215 functions as the Proton donor in the catalytic mechanism. 3-amino-2-oxopropyl phosphate-binding positions include Gly-216 and 237 to 238; that span reads GH.

This sequence belongs to the PNP synthase family. Homooctamer; tetramer of dimers.

It localises to the cytoplasm. The catalysed reaction is 3-amino-2-oxopropyl phosphate + 1-deoxy-D-xylulose 5-phosphate = pyridoxine 5'-phosphate + phosphate + 2 H2O + H(+). It functions in the pathway cofactor biosynthesis; pyridoxine 5'-phosphate biosynthesis; pyridoxine 5'-phosphate from D-erythrose 4-phosphate: step 5/5. Functionally, catalyzes the complicated ring closure reaction between the two acyclic compounds 1-deoxy-D-xylulose-5-phosphate (DXP) and 3-amino-2-oxopropyl phosphate (1-amino-acetone-3-phosphate or AAP) to form pyridoxine 5'-phosphate (PNP) and inorganic phosphate. This chain is Pyridoxine 5'-phosphate synthase, found in Helicobacter pylori (strain P12).